The sequence spans 207 residues: Guanylate kinase (207 aa).

The Guanylate kinase-like domain maps to 4-184 (GTLYIVSAPS…ALMDFKAILR (181 aa)). 11 to 18 (APSGAGKS) serves as a coordination point for ATP.

It belongs to the guanylate kinase family.

It is found in the cytoplasm. The enzyme catalyses GMP + ATP = GDP + ADP. Its function is as follows. Essential for recycling GMP and indirectly, cGMP. The sequence is that of Guanylate kinase from Vibrio parahaemolyticus serotype O3:K6 (strain RIMD 2210633).